Reading from the N-terminus, the 115-residue chain is UPF0122 protein lp_1634 (115 aa).

Belongs to the UPF0122 family.

Might take part in the signal recognition particle (SRP) pathway. This is inferred from the conservation of its genetic proximity to ftsY/ffh. May be a regulatory protein. The sequence is that of UPF0122 protein lp_1634 from Lactiplantibacillus plantarum (strain ATCC BAA-793 / NCIMB 8826 / WCFS1) (Lactobacillus plantarum).